The chain runs to 182 residues: ATP-dependent protease subunit HslV (182 aa).

Thr10 is a catalytic residue. 3 residues coordinate Na(+): Ala166, Cys169, and Ser172.

It belongs to the peptidase T1B family. HslV subfamily. In terms of assembly, a double ring-shaped homohexamer of HslV is capped on each side by a ring-shaped HslU homohexamer. The assembly of the HslU/HslV complex is dependent on binding of ATP.

The protein localises to the cytoplasm. The catalysed reaction is ATP-dependent cleavage of peptide bonds with broad specificity.. With respect to regulation, allosterically activated by HslU binding. Functionally, protease subunit of a proteasome-like degradation complex believed to be a general protein degrading machinery. This is ATP-dependent protease subunit HslV from Rickettsia typhi (strain ATCC VR-144 / Wilmington).